Here is an 885-residue protein sequence, read N- to C-terminus: MKSSDIRQSFLDFFVGKSHAIVRSAPVIPADDPTLLFTNAGMNQFKDVFLAKGTRSYSRAADTQKCIRASGKHNDLEDVGRDTYHHTFFEMLGNWSFGDYYKEEAITWAWELLTVVWKLPEERLYATVYHDDDESFRIWEEKTSIRPDHILRFGDKDNFWEMGETGPCGPCSEIHIDLTPDGSGRALVNADDPQAIELWNLVFIQYDRQVDGRLEPLPQRHVDTGMGFERVCAVMQGKSSNYDTDVFRPLFDTITELTGVEYGASMHDPQDIAMRVIADHARTLSFALSDGAMPSNEGRGYVLRRILRRALRYAKDLGYNKPILHRLVATVADSMGDVFPELRDRQDAVARIVKAEEESFLVTLDRGIEIFNGLVGKVRGEGSSTLEGEDAFKLYDTYGFPFDLTRLMASSAGLQVDGEGFERCMQEQKTRARQDRREKQRGGAEEGSWEWFSDLHATEFTGYDGLEADASIIGISRSKKNLLLVLDRTPFYAESGGQTGDRGWIETGEYRLEVTDTQKDGDSFVHVVTRAFDNVRDSEADPADIAVGPGRVHASVDRKLRQATERNHTATHLLHAVLRHTLGAHVQQKGSLVNPERLRFDFSHFSKLTPEEIDAVESAVNDCIRQAEATLKHADVPYDDAITKGALAFFGDKYADLVRVVEIPGISVELCGGTHVDNVGQIGLFKIVGESSVAAGVRRIEALTGRAAEELMWNEYRELHDVRQLLKMKAEEPPAEKVAAILEERRALEKQLAELKAEVLLVKLQGDASALEDVCGCRIVARVVDGADAEGLRYAAQMLRQQFPLSAGLLCSSAEGKVSLAAFASDRAVKELGIDAGKLIRQAAAAVKGGGGGKAEFATAGGKNPEGMEDACRVFREAVRCIVKA.

Residues 426 to 444 are compositionally biased toward basic and acidic residues; it reads QEQKTRARQDRREKQRGGA. Positions 426 to 445 are disordered; it reads QEQKTRARQDRREKQRGGAE. Residues H568, H572, C671, and H675 each contribute to the Zn(2+) site.

The protein belongs to the class-II aminoacyl-tRNA synthetase family. Requires Zn(2+) as cofactor.

The protein localises to the cytoplasm. The enzyme catalyses tRNA(Ala) + L-alanine + ATP = L-alanyl-tRNA(Ala) + AMP + diphosphate. Functionally, catalyzes the attachment of alanine to tRNA(Ala) in a two-step reaction: alanine is first activated by ATP to form Ala-AMP and then transferred to the acceptor end of tRNA(Ala). Also edits incorrectly charged Ser-tRNA(Ala) and Gly-tRNA(Ala) via its editing domain. In Chlorobium phaeovibrioides (strain DSM 265 / 1930) (Prosthecochloris vibrioformis (strain DSM 265)), this protein is Alanine--tRNA ligase.